Here is a 365-residue protein sequence, read N- to C-terminus: Galactoside alpha-(1,2)-fucosyltransferase 1 (365 aa).

The Cytoplasmic portion of the chain corresponds to Met-1–His-8. Residues Leu-9–Phe-25 form a helical; Signal-anchor for type II membrane protein membrane-spanning segment. Residues Leu-26–Pro-365 lie on the Lumenal side of the membrane. Residues Asn-65, Asn-301, and Asn-327 are each glycosylated (N-linked (GlcNAc...) asparagine).

This sequence belongs to the glycosyltransferase 11 family.

The protein resides in the golgi apparatus. Its subcellular location is the golgi stack membrane. The catalysed reaction is a beta-D-galactosyl-(1-&gt;4)-N-acetyl-beta-D-glucosaminyl derivative + GDP-beta-L-fucose = an alpha-L-Fuc-(1-&gt;2)-beta-D-Gal-(1-&gt;4)-beta-D-GlcNAc derivative + GDP + H(+). The enzyme catalyses a ganglioside GA1 + GDP-beta-L-fucose = a ganglioside Fuc-GA1 + GDP + H(+). It carries out the reaction a beta-D-Gal-(1-&gt;3)-beta-D-GlcNAc-(1-&gt;3)-beta-D-Gal-(1-&gt;4)-beta-D-Glc-(1&lt;-&gt;1')-Cer(d18:1(4E)) + GDP-beta-L-fucose = alpha-L-fucosyl-(1-&gt;2)- beta-D-galactosyl-(1-&gt;3)-N-acetyl-beta-D-glucosaminyl-(1-&gt;3)-beta-D-galactosyl-(1-&gt;4)-beta-D-glucosyl-(1&lt;-&gt;1')-N-acylsphing-4-enine + GDP + H(+). It catalyses the reaction a neolactoside nLc4Cer(d18:1(4E)) + GDP-beta-L-fucose = a neolactoside IV(2)-alpha-Fuc-nLc4Cer(d18:1(4E)) + GDP + H(+). The catalysed reaction is a ganglioside GM1 + GDP-beta-L-fucose = a ganglioside Fuc-GM1 + GDP + H(+). The enzyme catalyses beta-D-galactosyl-(1-&gt;3)-N-acetyl-D-galactosamine + GDP-beta-L-fucose = alpha-L-fucosyl-(1-&gt;2)-beta-D-galactosyl-(1-&gt;3)-N-acetyl-D-galactosamine + GDP + H(+). It functions in the pathway protein modification; protein glycosylation. Functionally, catalyzes the transfer of L-fucose, from a guanosine diphosphate-beta-L-fucose, to the terminal galactose residue of glycoconjugates through an alpha(1,2) linkage leading to H antigen synthesis that is an intermediate substrate in the synthesis of ABO blood group antigens. H antigen is essential for maturation of the glomerular layer of the main olfactory bulb, in cell migration and early cell-cell contacts during tumor associated angiogenesis. Preferentially fucosylates soluble lactose and to a lesser extent fucosylates glycolipids gangliosides GA1 and GM1a. This is Galactoside alpha-(1,2)-fucosyltransferase 1 from Mico humeralifer (Black and white tassel-ear marmoset).